Reading from the N-terminus, the 202-residue chain is NADH:(hydroxy)cinnamate reductase subunit CrdA (202 aa).

This sequence belongs to the NADH-dependent flavin reductase family. As to quaternary structure, NADH:(hydroxy)cinnamate reductase Crd is a heterodimer composed of CrdA and CrdB subunits, encoded by adjacent genes. Requires FMN as cofactor.

Component of the NADH:(hydroxy)cinnamate reductase. CrdA is probably reduced by NADH and then transfers the electrons to the catalytic center of CrdB. Is likely involved in protecting V.ruber from (hydroxy)cinnamate poisoning. The chain is NADH:(hydroxy)cinnamate reductase subunit CrdA from Vibrio ruber (strain DSM 16370 / JCM 11486 / BCRC 17186 / CECT 7878 / LMG 23124 / VR1).